Consider the following 400-residue polypeptide: Phosphoglycerate kinase (400 aa).

Substrate contacts are provided by residues 23 to 25 (DLN), arginine 38, 61 to 64 (HFGR), arginine 120, and arginine 153. ATP is bound by residues lysine 203, glutamate 325, and 355-358 (GGDT).

The protein belongs to the phosphoglycerate kinase family. Monomer.

The protein localises to the cytoplasm. It catalyses the reaction (2R)-3-phosphoglycerate + ATP = (2R)-3-phospho-glyceroyl phosphate + ADP. It functions in the pathway carbohydrate degradation; glycolysis; pyruvate from D-glyceraldehyde 3-phosphate: step 2/5. The polypeptide is Phosphoglycerate kinase (Methylorubrum extorquens (strain CM4 / NCIMB 13688) (Methylobacterium extorquens)).